The primary structure comprises 379 residues: DNA (cytosine-5)-methyltransferase (379 aa).

The 363-residue stretch at 4-366 (LRVLEFYSGI…KVLVSPNEEE (363 aa)) folds into the SAM-dependent MTase C5-type domain. The active site involves C78. The segment covering 178-192 (KKEQDKHNEKVDENK) has biased composition (basic and acidic residues). The interval 178 to 205 (KKEQDKHNEKVDENKLNNNSNNNNEQNK) is disordered. Residues 193 to 203 (LNNNSNNNNEQ) are compositionally biased toward low complexity.

This sequence belongs to the class I-like SAM-binding methyltransferase superfamily. C5-methyltransferase family.

It localises to the nucleus. It catalyses the reaction a 2'-deoxycytidine in DNA + S-adenosyl-L-methionine = a 5-methyl-2'-deoxycytidine in DNA + S-adenosyl-L-homocysteine + H(+). Involved in epigenetic gene silencing. Methylates specific cytosine residues in the retrotransposons DIRS-1 and Skipper. This chain is DNA (cytosine-5)-methyltransferase (dnmA), found in Dictyostelium discoideum (Social amoeba).